Here is a 342-residue protein sequence, read N- to C-terminus: Nucleoid-associated protein Sputcn32_2288 (342 aa).

It belongs to the YejK family.

It is found in the cytoplasm. The protein localises to the nucleoid. The sequence is that of Nucleoid-associated protein Sputcn32_2288 from Shewanella putrefaciens (strain CN-32 / ATCC BAA-453).